Here is a 177-residue protein sequence, read N- to C-terminus: Large ribosomal subunit protein uL6 (177 aa).

Belongs to the universal ribosomal protein uL6 family. In terms of assembly, part of the 50S ribosomal subunit.

In terms of biological role, this protein binds to the 23S rRNA, and is important in its secondary structure. It is located near the subunit interface in the base of the L7/L12 stalk, and near the tRNA binding site of the peptidyltransferase center. The sequence is that of Large ribosomal subunit protein uL6 from Rhizobium johnstonii (strain DSM 114642 / LMG 32736 / 3841) (Rhizobium leguminosarum bv. viciae).